The primary structure comprises 125 residues: Cystatin-like cysteine protease inhibitor EPIC2B (125 aa).

The signal sequence occupies residues 1–21; it reads MSFLRPTLALLAVTALVTTSG. N45 carries N-linked (GlcNAc...) asparagine glycosylation. The Secondary area of contact motif lies at 68-72; it reads QVVSG.

Belongs to the cystatin family. Interacts with the host papain-like cysteine protease PIP1. Interacts with the host papain-like cysteine protease RCR3. Interacts with the host papain-like cysteine protease C14.

The protein resides in the secreted. Its function is as follows. Secreted effector that interacts with and inhibits the pathogenesis-related papain-like cysteine proteases C14, PIP1 and RCR3 of host plants. Inhibition of host proteases by a pathogen extracellular protease inhibitor forms a specific type of defense-counterdefense mechanism between plants and microbial pathogens. The polypeptide is Cystatin-like cysteine protease inhibitor EPIC2B (Phytophthora infestans (Potato late blight agent)).